Here is a 151-residue protein sequence, read N- to C-terminus: Deoxyuridine 5'-triphosphate nucleotidohydrolase (151 aa).

Substrate contacts are provided by residues 70 to 72 (RSG), N83, 87 to 89 (LID), and M97.

Belongs to the dUTPase family. It depends on Mg(2+) as a cofactor.

It catalyses the reaction dUTP + H2O = dUMP + diphosphate + H(+). It functions in the pathway pyrimidine metabolism; dUMP biosynthesis; dUMP from dCTP (dUTP route): step 2/2. Functionally, this enzyme is involved in nucleotide metabolism: it produces dUMP, the immediate precursor of thymidine nucleotides and it decreases the intracellular concentration of dUTP so that uracil cannot be incorporated into DNA. The protein is Deoxyuridine 5'-triphosphate nucleotidohydrolase of Ectopseudomonas mendocina (strain ymp) (Pseudomonas mendocina).